The following is a 525-amino-acid chain: DEAD-box ATP-dependent RNA helicase CshA (525 aa).

Positions 2-30 (TTFRELGLSDSLLQSVESMGFEEATPIQA) match the Q motif motif. Residues 33–203 (IPHALQGKDI…ERFMTEPQHI (171 aa)) form the Helicase ATP-binding domain. Residue 46 to 53 (AQTGTGKT) coordinates ATP. The DEAD box signature appears at 151–154 (DEAD). In terms of domain architecture, Helicase C-terminal spans 214-374 (NIQQFYLEVQ…RMDAPTLDEA (161 aa)). The disordered stretch occupies residues 428 to 525 (TTPIALTSEP…RKHHSRKPQA (98 aa)). Over residues 458–503 (DGNRNRSRDGRGGDGRNRDRNRDGRNRDGNRDRNRDGGNRGRRGEG) the composition is skewed to basic and acidic residues. Positions 515–525 (ERKHHSRKPQA) are enriched in basic residues.

This sequence belongs to the DEAD box helicase family. CshA subfamily. Oligomerizes, may be a member of the RNA degradosome.

It localises to the cytoplasm. The catalysed reaction is ATP + H2O = ADP + phosphate + H(+). Functionally, DEAD-box RNA helicase possibly involved in RNA degradation. Unwinds dsRNA in both 5'- and 3'-directions, has RNA-dependent ATPase activity. The sequence is that of DEAD-box ATP-dependent RNA helicase CshA from Bacillus cereus (strain ATCC 10987 / NRS 248).